A 309-amino-acid polypeptide reads, in one-letter code: Large ribosomal subunit protein uL22m (309 aa).

A mitochondrion-targeting transit peptide spans M1–R25. Residues S40–S63 are disordered. A compositionally biased stretch (basic and acidic residues) spans N48 to E59.

Belongs to the universal ribosomal protein uL22 family. As to quaternary structure, component of the mitochondrial large ribosomal subunit (mt-LSU). Mature yeast 74S mitochondrial ribosomes consist of a small (37S) and a large (54S) subunit. The 37S small subunit contains a 15S ribosomal RNA (15S mt-rRNA) and 34 different proteins. The 54S large subunit contains a 21S rRNA (21S mt-rRNA) and 46 different proteins. uL22m forms the wall of the exit tunnel.

The protein resides in the mitochondrion. In terms of biological role, component of the mitochondrial ribosome (mitoribosome), a dedicated translation machinery responsible for the synthesis of mitochondrial genome-encoded proteins, including at least some of the essential transmembrane subunits of the mitochondrial respiratory chain. The mitoribosomes are attached to the mitochondrial inner membrane and translation products are cotranslationally integrated into the membrane. This Saccharomyces cerevisiae (strain ATCC 204508 / S288c) (Baker's yeast) protein is Large ribosomal subunit protein uL22m (MRPL22).